The sequence spans 400 residues: Flavo-diiron protein FprA2 (400 aa).

The tract at residues 32–216 is zinc metallo-hydrolase; the sequence is GTSYNAYLIK…VVKGLDILDA (185 aa). The Fe cation site is built by His79, Glu81, Asp83, His147, Asp166, and His226. A Flavodoxin-like domain is found at 257-397; that stretch reads IPIFYCSAYG…KAFKFGEDFA (141 aa). Residues 263-267 and 345-372 each bind FMN; these read SAYGN and AFGS…KVFQ.

In the N-terminal section; belongs to the zinc metallo-hydrolase group 3 family. In terms of assembly, homotetramer. It depends on FMN as a cofactor. Fe cation serves as cofactor.

The enzyme catalyses 2 NADH + O2 + 2 H(+) = 2 NAD(+) + 2 H2O. In terms of biological role, catalyzes the four-electron reduction of molecular oxygen to water. In fact, functions as the terminal component of an NADH oxidase (NADH:O(2) oxidoreductase) when using NADH:rubredoxin oxidoreductase (NROR) and rubredoxin (Rd) as electron transport intermediaries between NADH and FDP. Is thus able to reductively scavenge intracellular dioxygen and is part of an oxidative stress defense system in C.acetobutylicum, an obligate anaerobic bacterium. Can also serve as the terminal component of an NADH:nitric oxide oxidoreductase (NOR) with a catalytic efficiency comparable to that of its NADH oxidase activity, and therefore might have an in vivo role in scavenging nitric oxide. This is Flavo-diiron protein FprA2 (fprA2) from Clostridium acetobutylicum (strain ATCC 824 / DSM 792 / JCM 1419 / IAM 19013 / LMG 5710 / NBRC 13948 / NRRL B-527 / VKM B-1787 / 2291 / W).